A 134-amino-acid chain; its full sequence is Complexin-2 (134 aa).

Residues 1-114 (MDFVMKQALG…CGDEEEEEEE (114 aa)) are disordered. Positions 15–85 (DMGKMLGGEE…EEKEAEEKAA (71 aa)) are enriched in basic and acidic residues. A coiled-coil region spans residues 28–84 (PDAQKKEEERQEALRQQEEERKAKHARMEAEREKVRQQIRDKYGLKKKEEKEAEEKA). The segment at 41–97 (LRQQEEERKAKHARMEAEREKVRQQIRDKYGLKKKEEKEAEEKAALEQPCEGSLTRP) is interaction with the SNARE complex. The residue at position 93 (serine 93) is a Phosphoserine.

This sequence belongs to the complexin/synaphin family. In terms of assembly, binds to the SNARE core complex containing SNAP25, VAMP2 and STX1A. In terms of tissue distribution, nervous system. Also present in adrenal chromaffin cells (at protein level).

The protein resides in the cytoplasm. The protein localises to the cytosol. It is found in the presynapse. It localises to the nucleus. Its subcellular location is the perikaryon. Its function is as follows. Negatively regulates the formation of synaptic vesicle clustering at active zone to the presynaptic membrane in postmitotic neurons. Positively regulates a late step in exocytosis of various cytoplasmic vesicles, such as synaptic vesicles and other secretory vesicles. Also involved in mast cell exocytosis. The chain is Complexin-2 (CPLX2) from Bos taurus (Bovine).